The following is a 108-amino-acid chain: uncharacterized protein (108 aa).

Residues 7 to 106 (CPRFEKAVDI…WATEWIDPSF (100 aa)) form the HTH hxlR-type domain.

This is an uncharacterized protein from Bacillus subtilis (strain 168).